The following is a 140-amino-acid chain: Phosphopantetheine adenylyltransferase (140 aa).

S9 provides a ligand contact to substrate. ATP-binding positions include 9–10 (SF) and H17. Positions 41, 74, and 88 each coordinate substrate. ATP-binding positions include 89 to 91 (GLR), E99, and 124 to 130 (KRSLSST).

The protein belongs to the bacterial CoaD family. As to quaternary structure, homohexamer. Mg(2+) serves as cofactor.

The protein localises to the cytoplasm. The catalysed reaction is (R)-4'-phosphopantetheine + ATP + H(+) = 3'-dephospho-CoA + diphosphate. It participates in cofactor biosynthesis; coenzyme A biosynthesis; CoA from (R)-pantothenate: step 4/5. In terms of biological role, reversibly transfers an adenylyl group from ATP to 4'-phosphopantetheine, yielding dephospho-CoA (dPCoA) and pyrophosphate. The sequence is that of Phosphopantetheine adenylyltransferase from Mycoplasma capricolum subsp. capricolum (strain California kid / ATCC 27343 / NCTC 10154).